The chain runs to 220 residues: Phosphoenolpyruvate guanylyltransferase (220 aa).

3 residues coordinate phosphoenolpyruvate: T154, G169, and S172.

The protein belongs to the CofC family.

The enzyme catalyses phosphoenolpyruvate + GTP + H(+) = enolpyruvoyl-2-diphospho-5'-guanosine + diphosphate. It functions in the pathway cofactor biosynthesis; coenzyme F420 biosynthesis. Functionally, guanylyltransferase that catalyzes the activation of phosphoenolpyruvate (PEP) as enolpyruvoyl-2-diphospho-5'-guanosine, via the condensation of PEP with GTP. It is involved in the biosynthesis of coenzyme F420, a hydride carrier cofactor. This chain is Phosphoenolpyruvate guanylyltransferase, found in Mycolicibacterium paratuberculosis (strain ATCC BAA-968 / K-10) (Mycobacterium paratuberculosis).